The following is a 425-amino-acid chain: Pectate lyase L (425 aa).

The N-terminal stretch at 1 to 25 (MKYLNCFISTGLAAFFLVNSTSVLA) is a signal peptide. Residues Cys-28 and Cys-114 are joined by a disulfide bond. Ca(2+) contacts are provided by Asp-209, Asp-233, Asp-234, and Asp-237. Residue Lys-273 is the Proton acceptor of the active site. Ca(2+) contacts are provided by Asn-402, Ser-413, Ala-416, Asp-418, and Glu-423.

The protein belongs to the polysaccharide lyase 9 family. The cofactor is Ca(2+).

It localises to the secreted. It carries out the reaction Eliminative cleavage of (1-&gt;4)-alpha-D-galacturonan to give oligosaccharides with 4-deoxy-alpha-D-galact-4-enuronosyl groups at their non-reducing ends.. It functions in the pathway glycan metabolism; pectin degradation; 2-dehydro-3-deoxy-D-gluconate from pectin: step 2/5. In terms of biological role, presents an endo-cleaving activity on polygalacturonate or partially methylated pectin. Is effective in the maceration of plant tissue, and has an important role in soft-rot disease. Is 280-fold less active against polygalacturonate than the major pectate lyase PelB. When assayed on polygalacturonate, PelL releases oligogalacturonates of different sizes; upon prolonged incubation, PelL degrades the primary products to unsaturated tetramer and pentamer in addition to unsaturated dimer and trimer. When assayed on oligogalacturonates (degrees of polymerization of 2 to 8), it preferentially forms unsaturated tetramer, and displays the highest activity on the octamer. The chain is Pectate lyase L (pelL) from Dickeya dadantii (strain 3937) (Erwinia chrysanthemi (strain 3937)).